The chain runs to 195 residues: MAKLYFYYSTMNAGKSTTLLQSAYNYNERNMNTLVYTAAIDDRFGAGRVTSRIGISQQAKLFNRESNLFEEIKRHLASEKLHCILIDEAQFLTKQQVYQLSDVVDLLNIPVLCYGLRTDFQAELFEGSQYLLAWADQLEELKTICHCGRKANFVLRLNERGDVVKDGEQIQIGGNERYLSVCRFHFKQKTGKLHN.

Residues 9–16 (STMNAGKS) and 87–90 (DEAQ) contribute to the ATP site. The Proton acceptor role is filled by Glu-88. Residues Cys-145, Cys-147, Cys-182, and His-185 each contribute to the Zn(2+) site.

This sequence belongs to the thymidine kinase family. As to quaternary structure, homotetramer.

The protein resides in the cytoplasm. The enzyme catalyses thymidine + ATP = dTMP + ADP + H(+). The polypeptide is Thymidine kinase (Mannheimia succiniciproducens (strain KCTC 0769BP / MBEL55E)).